A 315-amino-acid polypeptide reads, in one-letter code: MLKNKILATTLSVSLLAPLANPLLENAKAANDTEEIGKGSDIEIIKRTEDKTSNKWGVTQNIQFDFVKDKKYNKDALILKMQGFISSRTTYYNYKKTNHVKAMRWPFQYNIGLKTNDKYVSLINYLPKNKIESTNVSQTLGYNIGGNFQSAPSLGGNGSFNYSKSISYTQQNYVSEVEQQNSKSVLWGVKANSFATESGQKSAFDSDLFVGYKPHSKDPRDYFVPDSELPPLVQSGFNPSFIATVSHEKGSSDTSEFEITYGRNMDVTHAIKRSTHYGNSYLDGHRVHNAFVNRNYTVKYEVNWKTHEIKVKGQN.

A signal peptide spans 1 to 29 (MLKNKILATTLSVSLLAPLANPLLENAKA).

It belongs to the aerolysin family. In terms of assembly, toxicity requires sequential binding and synergistic association of a class S and a class F component which form heterooligomeric complexes. HlgC (class S) associates with HlgB (class F) thus forming an CB toxin.

Functionally, toxin that seems to act by forming pores in the membrane of the cell. Has a hemolytic and a leucotoxic activity. In Staphylococcus aureus (strain MSSA476), this protein is Gamma-hemolysin component C (hlgC).